Consider the following 245-residue polypeptide: Short-chain dehydrogenase/reductase pyiH (245 aa).

NADP(+) contacts are provided by Ile18, Arg42, Asp68, and Asn95. Residue Ser150 is the Proton donor of the active site.

The protein belongs to the short-chain dehydrogenases/reductases (SDR) family.

The protein operates within mycotoxin biosynthesis. Functionally, short-chain dehydrogenase/reductase; part of the gene cluster that mediates the biosynthesis of the mycotoxin pyrichalasin H, a tyrosine-derived cytochalasan that inhibits the growth of rice seedlings, but also inhibits lymphocyte capping and actin polymerization and alters cell morphology. Pyrichalasin H is indicated as the responsible agent for the genus-specific pathogenicity of M.grisea toward crabgrass. The first step in the pathway is catalyzed by the O-methyltransferase pyiA which methylates free tyrosine to generate the precursor O-methyltyrosine. The hybrid PKS-NRPS pyiS, assisted by the enoyl reductase pyiC, are responsible for fusion of the O-methyltyrosine precursor and the polyketide backbone. The polyketide synthase module (PKS) of pyiS is responsible for the synthesis of the polyketide backbone and the downstream nonribosomal peptide synthetase (NRPS) amidates the carboxyl end of the polyketide with the O-methyltyrosine precursor. As the NRPS A-domain demonstrates substrate tolerance, pyiS can also use phenylalanine, tyrosine and even para-chlorophenylalanine as amino acid precursor, which leads to the production of novel cytochalasans, including halogenated cytochalasans. Because pyiS lacks a designated enoylreductase (ER) domain, the required activity is provided the enoyl reductase pyiC. Reduction by the hydrolyase pyiE leads to 1,5-dihydropyrrolone, which is substrate for dehydration and intra-molecular Diels-Alder cyclization by the Diels-Alderase pyiF to yield the required isoindolone-fused macrocycle. The tailoring cytochrome P450 monooxygenases piyD and piyG catalyze the hydroxylation at C-18 and C-7, respectivily, whereas the short-chain dehydrogenase/reductase pyiH reduces the carbonyl at C-21 in preparation for the transfer of an acetyl group by the acetyltransferase pyiB. These 3 reactions whose order is not clear yet, lead to the production of O-methylpyrichalasin J, a deacetylated pyrichalasin H. Finally, pyiB to converts O-methylpyrichalasin J into the final product pyrichalasin H via acetylation of C-21. The chain is Short-chain dehydrogenase/reductase pyiH from Pyricularia grisea (Crabgrass-specific blast fungus).